An 86-amino-acid chain; its full sequence is Translation machinery-associated protein 10 (86 aa).

Serine 28 and serine 79 each carry phosphoserine. The tract at residues 63-86 is disordered; that stretch reads NKTRRGSNSQNNERRLSDLQQYHI.

Belongs to the STF2 family. Associates with ribosomes.

It localises to the cytoplasm. It is found in the nucleus. Functionally, may be involved in inhibition of the reverse ATPase reaction of mitochondrial F(1)F(0)-type ATP synthase. The protein is Translation machinery-associated protein 10 of Saccharomyces cerevisiae (strain ATCC 204508 / S288c) (Baker's yeast).